Consider the following 147-residue polypeptide: UPF0306 protein YhbP (147 aa).

It belongs to the UPF0306 family.

The polypeptide is UPF0306 protein YhbP (Escherichia coli (strain SMS-3-5 / SECEC)).